We begin with the raw amino-acid sequence, 195 residues long: Putative kinase protein 143R (195 aa).

8-16 (GIIGAGKST) is a binding site for ATP. Substrate is bound by residues glutamate 31, tyrosine 43, and glutamine 54. Catalysis depends on glutamate 78, which acts as the Proton acceptor. Substrate is bound by residues arginine 79 and glutamate 142.

This sequence belongs to the DCK/DGK family.

This chain is Putative kinase protein 143R, found in Acheta domesticus (House cricket).